Reading from the N-terminus, the 60-residue chain is Large ribosomal subunit protein uL30 (60 aa).

It belongs to the universal ribosomal protein uL30 family. In terms of assembly, part of the 50S ribosomal subunit.

In Agathobacter rectalis (strain ATCC 33656 / DSM 3377 / JCM 17463 / KCTC 5835 / VPI 0990) (Eubacterium rectale), this protein is Large ribosomal subunit protein uL30.